We begin with the raw amino-acid sequence, 170 residues long: Ubiquitin-conjugating enzyme E2 2 (170 aa).

The UBC core domain maps to 4-150 (PARRRLMRDF…VKETVEKSWE (147 aa)). Cys-88 serves as the catalytic Glycyl thioester intermediate. The disordered stretch occupies residues 148–170 (SWEDDLKDMDDGDDDDDDDDDDD). Positions 152-170 (DLKDMDDGDDDDDDDDDDD) are enriched in acidic residues.

The protein belongs to the ubiquitin-conjugating enzyme family.

The protein resides in the cytoplasm. Its subcellular location is the nucleus. The catalysed reaction is S-ubiquitinyl-[E1 ubiquitin-activating enzyme]-L-cysteine + [E2 ubiquitin-conjugating enzyme]-L-cysteine = [E1 ubiquitin-activating enzyme]-L-cysteine + S-ubiquitinyl-[E2 ubiquitin-conjugating enzyme]-L-cysteine.. It participates in protein modification; protein ubiquitination. Functionally, catalyzes the covalent attachment of ubiquitin to other proteins. Plays a role in transcription regulation by catalyzing the monoubiquitination of histone H2B to form H2BK123ub1. H2BK123ub1 gives a specific tag for epigenetic transcriptional activation and is also a prerequisite for H3K4me and H3K79me formation. Also involved in postreplication repair of UV-damaged DNA, in N-end rule-dependent protein degradation and in sporulation. This chain is Ubiquitin-conjugating enzyme E2 2 (UBC2), found in Eremothecium gossypii (strain ATCC 10895 / CBS 109.51 / FGSC 9923 / NRRL Y-1056) (Yeast).